The chain runs to 473 residues: MNHLANNYGYYPQDCRTQYSRMNSAEAELTSLPVHVSLQDRELWDKFSSIGTEMLITKSGRRMFPSCKVTVTGLNPKVKYVVIMDMVPFDNHKYKWNKDCWEVNGSSDPHLPNRFFIHPDSPAPGQKWMQYPISFHKLKLTNNTLNSNGLVVLHSMHKYQPRLHIVQSPDPCTPHNPGAYLRFTFPEAAFIAVTAYQNQEITKLKIDNNPFAKGFRDNGLNRKRFRDKGTQEMQDTDRQVKLDLTANECAAGMSQMVEDVDVSVSSSVDCRDTQNSSSVSLNPFISAFTNPSSAGGAAAHQTHTLLSLSNRHFSSPRESNLNSVCAALPVSQLSTGHTSFSRLNPQETHHNSRPKIQLQPPHPSLQCHDLDVRLPLPPKLSRVQLSESALRNLEMSPLSDCANPRPLTNILNRSCFRASTPSGKLLPNPPQPEQFLRGSEREIYPAVQEYTDQQFTLNSQTEHRPHMRPLTEY.

The segment at residues 43–217 (LWDKFSSIGT…NNPFAKGFRD (175 aa)) is a DNA-binding region (T-box). The disordered stretch occupies residues 342–361 (RLNPQETHHNSRPKIQLQPP).

Exclusively expressed by ventral mesendoderm.

The protein resides in the nucleus. Functionally, probable transcriptional regulator involved in developmental processes. In Danio rerio (Zebrafish), this protein is T-box transcription factor TBX6L (tbx6l).